Consider the following 492-residue polypeptide: Phytoene desaturase (lycopene-forming) (492 aa).

FAD is bound at residue 5 to 38 (TVIGAGFGGLALAIRLQAAGIPVLLLEQRDKPGG).

The protein belongs to the carotenoid/retinoid oxidoreductase family. FAD is required as a cofactor.

Its subcellular location is the cell membrane. It carries out the reaction 15-cis-phytoene + 4 A = all-trans-lycopene + 4 AH2. It functions in the pathway carotenoid biosynthesis; lycopene biosynthesis. Inhibited by NAD and NADP. Converts 15-cis-phytoene into all-trans-lycopene via the intermediary of all-trans-phytofluene, all-trans-zeta-carotene and all-trans-neurosporene, by the introduction of four double bonds. The sequence is that of Phytoene desaturase (lycopene-forming) (crtI) from Pantoea ananas (Erwinia uredovora).